A 420-amino-acid chain; its full sequence is Acetyl-CoA acetyltransferase A, mitochondrial (420 aa).

A mitochondrion-targeting transit peptide spans 1–33 (MAFCGTRTAARLSHSTRALHNTHRNFASQRTLN). The active-site Acyl-thioester intermediate is cysteine 119. CoA-binding positions include tyrosine 212, 251 to 253 (RVD), and lysine 256. A K(+)-binding site is contributed by tyrosine 212. 2 residues coordinate K(+): alanine 273 and alanine 274. Serine 277 provides a ligand contact to CoA. Valine 374 is a binding site for K(+). The active-site Proton donor/acceptor is the cysteine 406.

This sequence belongs to the thiolase-like superfamily. Thiolase family. Homotetramer.

The protein localises to the mitochondrion. It catalyses the reaction 2 acetyl-CoA = acetoacetyl-CoA + CoA. It carries out the reaction propanoyl-CoA + acetyl-CoA = 2-methyl-3-oxobutanoyl-CoA + CoA. It functions in the pathway lipid metabolism; fatty acid beta-oxidation. Functionally, this is one of the enzymes that catalyzes the last step of the mitochondrial beta-oxidation pathway, an aerobic process breaking down fatty acids into acetyl-CoA. Using free coenzyme A/CoA, catalyzes the thiolytic cleavage of medium- to long-chain 3-oxoacyl-CoAs into acetyl-CoA and a fatty acyl-CoA shortened by two carbon atoms. The activity of the enzyme is reversible and it can also catalyze the condensation of two acetyl-CoA molecules into acetoacetyl-CoA. Thereby, it plays a major role in ketone body metabolism. The sequence is that of Acetyl-CoA acetyltransferase A, mitochondrial (acat1-a) from Xenopus laevis (African clawed frog).